Consider the following 196-residue polypeptide: Putative NADH dehydrogenase/NAD(P)H nitroreductase xcc-b100_0585 (196 aa).

The protein belongs to the nitroreductase family. HadB/RutE subfamily. The cofactor is FMN.

This is Putative NADH dehydrogenase/NAD(P)H nitroreductase xcc-b100_0585 from Xanthomonas campestris pv. campestris (strain B100).